Here is a 190-residue protein sequence, read N- to C-terminus: Threonylcarbamoyl-AMP synthase (190 aa).

Residues 7–190 (GDAIAAAIDV…ALTGELFRQG (184 aa)) enclose the YrdC-like domain.

This sequence belongs to the SUA5 family. TsaC subfamily.

It localises to the cytoplasm. It catalyses the reaction L-threonine + hydrogencarbonate + ATP = L-threonylcarbamoyladenylate + diphosphate + H2O. Required for the formation of a threonylcarbamoyl group on adenosine at position 37 (t(6)A37) in tRNAs that read codons beginning with adenine. Catalyzes the conversion of L-threonine, HCO(3)(-)/CO(2) and ATP to give threonylcarbamoyl-AMP (TC-AMP) as the acyladenylate intermediate, with the release of diphosphate. This Escherichia coli O1:K1 / APEC protein is Threonylcarbamoyl-AMP synthase.